Here is a 665-residue protein sequence, read N- to C-terminus: Dual specificity protein phosphatase 16 (665 aa).

The 116-residue stretch at 22 to 137 (GTEKVLLIDS…FSRCFPGLCE (116 aa)) folds into the Rhodanese domain. (Microbial infection) N6-acetyllysine; by EIS is present on Lys55. Positions 158-300 (GPTRILPNLY…LLDYEKKIKN (143 aa)) constitute a Tyrosine-protein phosphatase domain. Cys244 serves as the catalytic Phosphocysteine intermediate. A disordered region spans residues 321–368 (EPVPAVSEGGQKSETPLSPPCADSATSEAAGQRPVHPASVPSVPSVQP). Positions 354 to 368 (PVHPASVPSVPSVQP) are enriched in low complexity. Ser446 carries the post-translational modification Phosphoserine; by MAPK1. Polar residues-rich tracts occupy residues 449–458 (QELSEQTPET) and 487–499 (VRTS…QRSL). Disordered stretches follow at residues 449–505 (QELS…PLHR) and 597–665 (VRRR…IEVS). Ser501 carries the phosphoserine modification. Residues 602–622 (KPSDRADSRRSWHEESPFEKQ) show a composition bias toward basic and acidic residues.

Belongs to the protein-tyrosine phosphatase family. Non-receptor class dual specificity subfamily. As to quaternary structure, interacts with ARRB2. In terms of processing, phosphorylated at Ser-446 by MAPK1/ERK2, which prevents its degradation, and thereby stabilizes it and blocks JNK MAPK activity. (Microbial infection) Acetylated at Lys-55 by the M.tuberculosis Eis protein; this leads to the inhibition of JNK-dependent autophagy, phagosome maturation, and ROS (reactive oxygen species) generation for enhanced intracellular survival of M.tuberculosis.

It is found in the cytoplasm. It localises to the nucleus. Its subcellular location is the cytoplasmic vesicle. It carries out the reaction O-phospho-L-tyrosyl-[protein] + H2O = L-tyrosyl-[protein] + phosphate. It catalyses the reaction O-phospho-L-seryl-[protein] + H2O = L-seryl-[protein] + phosphate. The enzyme catalyses O-phospho-L-threonyl-[protein] + H2O = L-threonyl-[protein] + phosphate. Its function is as follows. Dual specificity protein phosphatase involved in the inactivation of MAP kinases. Dephosphorylates MAPK10 bound to ARRB2. This chain is Dual specificity protein phosphatase 16 (DUSP16), found in Homo sapiens (Human).